We begin with the raw amino-acid sequence, 237 residues long: B3 domain-containing protein Os03g0184500 (237 aa).

A DNA-binding region (TF-B3) is located at residues 137–228 (FVKPMLHSHV…TFKVHIIRAT (92 aa)).

The protein localises to the nucleus. This Oryza sativa subsp. japonica (Rice) protein is B3 domain-containing protein Os03g0184500.